The chain runs to 313 residues: MTSTPLSNSLPPTQHATWRDYLALTKPKVISLLLWTTVTAMFMAARGWPGDTFWSGLWLLIVVSVAGYMSAGSAGVFNMIIDRDIDLKMTRTAGRPTSSGLISSRNAAIFGTTLQVLSFVMLWVWGTPLAAWMSLAGFVFYVVIYTQWLKRTTWHNIVIGGAAGCFPPLVGWAAVTGDLNLFAGYLFAIIFFWTPVHFWALALMIKEEYREVGIPMLPVVHGDHMTVAQIGLYAIYTVVLSLMPVYFGAVSWIYFVSGALLGAWLLWLSYKLYRHVASGQPAERKVAVPLYLYSMLYLALLFLAGAIDRAVLS.

9 consecutive transmembrane segments (helical) span residues 29–49 (VISL…RGWP), 57–77 (LWLL…AGVF), 101–123 (LISS…VMLW), 124–144 (VWGT…YVVI), 157–177 (IVIG…AVTG), 185–205 (YLFA…ALMI), 225–245 (MTVA…LMPV), 247–267 (FGAV…WLLW), and 287–307 (AVPL…AGAI).

It belongs to the UbiA prenyltransferase family. Protoheme IX farnesyltransferase subfamily.

The protein resides in the cell membrane. It carries out the reaction heme b + (2E,6E)-farnesyl diphosphate + H2O = Fe(II)-heme o + diphosphate. Its pathway is porphyrin-containing compound metabolism; heme O biosynthesis; heme O from protoheme: step 1/1. Its function is as follows. Converts heme B (protoheme IX) to heme O by substitution of the vinyl group on carbon 2 of heme B porphyrin ring with a hydroxyethyl farnesyl side group. The sequence is that of Protoheme IX farnesyltransferase from Deinococcus radiodurans (strain ATCC 13939 / DSM 20539 / JCM 16871 / CCUG 27074 / LMG 4051 / NBRC 15346 / NCIMB 9279 / VKM B-1422 / R1).